The sequence spans 41 residues: Photosystem II reaction center protein Y (41 aa).

The chain crosses the membrane as a helical span at residues 7–25; sequence IAIVLAPVVIAASWAVFNI.

This sequence belongs to the PsbY family. PSII is composed of 1 copy each of membrane proteins PsbA, PsbB, PsbC, PsbD, PsbE, PsbF, PsbH, PsbI, PsbJ, PsbK, PsbL, PsbM, PsbT, PsbX, PsbY, PsbZ, Psb30/Ycf12, peripheral proteins PsbO, CyanoQ (PsbQ), PsbU, PsbV and a large number of cofactors. It forms dimeric complexes.

The protein localises to the cellular thylakoid membrane. Its function is as follows. Loosely associated component of the core of photosystem II (PSII), it is not always seen in crystals. PSII is a light-driven water plastoquinone oxidoreductase, using light energy to abstract electrons from H(2)O, generating a proton gradient subsequently used for ATP formation. The chain is Photosystem II reaction center protein Y from Nostoc punctiforme (strain ATCC 29133 / PCC 73102).